Consider the following 164-residue polypeptide: Ubiquitin-fold modifier-conjugating enzyme 1 (164 aa).

Cys116 functions as the Glycyl thioester intermediate in the catalytic mechanism.

This sequence belongs to the ubiquitin-conjugating enzyme family. UFC1 subfamily.

In terms of biological role, E2-like enzyme which forms an intermediate with UFM1 via a thioester linkage. This Drosophila willistoni (Fruit fly) protein is Ubiquitin-fold modifier-conjugating enzyme 1.